The primary structure comprises 428 residues: S-adenosylmethionine synthase (428 aa).

His-14 is an ATP binding site. Residue Asp-16 coordinates Mg(2+). Glu-42 is a binding site for K(+). L-methionine is bound by residues Glu-55 and Gln-98. The flexible loop stretch occupies residues 98 to 108 (QSGDINRGVER). ATP is bound by residues 165 to 167 (DAK), 251 to 252 (KF), Asp-260, 266 to 267 (RK), Ala-283, and Lys-287. L-methionine is bound at residue Asp-260. Lys-291 is a binding site for L-methionine.

The protein belongs to the AdoMet synthase family. As to quaternary structure, homotetramer; dimer of dimers. Mg(2+) serves as cofactor. The cofactor is K(+).

It is found in the cytoplasm. It carries out the reaction L-methionine + ATP + H2O = S-adenosyl-L-methionine + phosphate + diphosphate. It participates in amino-acid biosynthesis; S-adenosyl-L-methionine biosynthesis; S-adenosyl-L-methionine from L-methionine: step 1/1. Functionally, catalyzes the formation of S-adenosylmethionine (AdoMet) from methionine and ATP. The overall synthetic reaction is composed of two sequential steps, AdoMet formation and the subsequent tripolyphosphate hydrolysis which occurs prior to release of AdoMet from the enzyme. In Parabacteroides distasonis (strain ATCC 8503 / DSM 20701 / CIP 104284 / JCM 5825 / NCTC 11152), this protein is S-adenosylmethionine synthase.